Here is a 152-residue protein sequence, read N- to C-terminus: Acidic phospholipase A2 S16-19 (152 aa).

Positions 1-19 (MYPAHLLVLLAVCVSLLGA) are cleaved as a signal peptide. Residues 20–27 (SNIPLPSL) constitute a propeptide that is removed on maturation. 6 disulfide bridges follow: Cys-38-Cys-104, Cys-54-Cys-151, Cys-71-Cys-132, Cys-78-Cys-125, Cys-88-Cys-118, and Cys-111-Cys-123. Positions 55, 57, and 59 each coordinate Ca(2+). The active site involves His-75. A Ca(2+)-binding site is contributed by Asp-76. Asp-126 is an active-site residue.

The protein belongs to the phospholipase A2 family. Group I subfamily. D49 sub-subfamily. Requires Ca(2+) as cofactor. This enzyme lacks one of the seven disulfide bonds found in similar PLA2 proteins. In terms of tissue distribution, expressed by the venom gland.

Its subcellular location is the secreted. It carries out the reaction a 1,2-diacyl-sn-glycero-3-phosphocholine + H2O = a 1-acyl-sn-glycero-3-phosphocholine + a fatty acid + H(+). Functionally, snake venom phospholipase A2 (PLA2) that inhibits collagen-induced platelet aggregation. PLA2 catalyzes the calcium-dependent hydrolysis of the 2-acyl groups in 3-sn-phosphoglycerides. In Austrelaps superbus (Lowland copperhead snake), this protein is Acidic phospholipase A2 S16-19.